The primary structure comprises 209 residues: uncharacterized protein (209 aa).

6 consecutive 4Fe-4S ferredoxin-type domains span residues 38–67 (KTKP…IFSF), 63–92 (KIFS…KDRF), 90–119 (DRFT…KEIP), 122–151 (KTPV…EINP), 145–174 (INKE…TPDE), and 179–209 (LIVK…HRES). [4Fe-4S] cluster-binding residues include Cys-47, Cys-50, Cys-53, Cys-57, Cys-72, Cys-75, Cys-78, Cys-82, Cys-99, Cys-102, Cys-105, and Cys-109. Residues Cys-154, Cys-157, Cys-160, Cys-164, Cys-188, Cys-191, Cys-194, and Cys-198 each contribute to the [4Fe-4S] cluster site.

This is an uncharacterized protein from Methanocaldococcus jannaschii (strain ATCC 43067 / DSM 2661 / JAL-1 / JCM 10045 / NBRC 100440) (Methanococcus jannaschii).